Reading from the N-terminus, the 486-residue chain is Nucleolar GTP-binding protein 2 (486 aa).

The tract at residues 1-20 (MGTGKKEKSRRIREGDTKDG) is disordered. A phosphoserine mark is found at Ser-60, Ser-85, and Ser-155. Positions 212–373 (WNELYKVIDS…LIDCPGIVPP (162 aa)) constitute a CP-type G domain. GTP contacts are provided by residues 322-329 (GYPNTGKS) and 366-370 (DCPGI).

The protein belongs to the TRAFAC class YlqF/YawG GTPase family. NOG2 subfamily.

The protein resides in the nucleus. The protein localises to the nucleolus. Functionally, GTPase that associates with pre-60S ribosomal subunits in the nucleolus and is required for their nuclear export and maturation. The sequence is that of Nucleolar GTP-binding protein 2 (NOG2) from Saccharomyces cerevisiae (strain ATCC 204508 / S288c) (Baker's yeast).